A 227-amino-acid polypeptide reads, in one-letter code: Lipoprotein-releasing system ATP-binding protein LolD (227 aa).

One can recognise an ABC transporter domain in the interval 8-226 (IEVTNLCKSF…VVHMADGRIT (219 aa)). 44-51 (GASGAGKT) is a binding site for ATP.

It belongs to the ABC transporter superfamily. Lipoprotein translocase (TC 3.A.1.125) family. As to quaternary structure, the complex is composed of two ATP-binding proteins (LolD) and two transmembrane proteins (LolC and LolE).

It is found in the cell inner membrane. Its function is as follows. Part of the ABC transporter complex LolCDE involved in the translocation of mature outer membrane-directed lipoproteins, from the inner membrane to the periplasmic chaperone, LolA. Responsible for the formation of the LolA-lipoprotein complex in an ATP-dependent manner. This is Lipoprotein-releasing system ATP-binding protein LolD from Syntrophotalea carbinolica (strain DSM 2380 / NBRC 103641 / GraBd1) (Pelobacter carbinolicus).